The chain runs to 284 residues: Putative ABC transporter ATP-binding protein MG468.1 homolog (284 aa).

In terms of domain architecture, ABC transporter spans 53 to 284 (VLFKGVCKAV…PKTINEINWV (232 aa)). Residue 89–96 (GKSGSGKT) participates in ATP binding.

Belongs to the ABC transporter superfamily.

The sequence is that of Putative ABC transporter ATP-binding protein MG468.1 homolog from Mycoplasma pneumoniae (strain ATCC 29342 / M129 / Subtype 1) (Mycoplasmoides pneumoniae).